The sequence spans 609 residues: Vanadium chloroperoxidase (609 aa).

Residues K353, R360, S402, G403, H404, R490, and H496 each contribute to the vanadate site. The Proton donor role is filled by H404. A disordered region spans residues K569–P609.

The protein belongs to the vanadium-dependent haloperoxidase family. As to quaternary structure, homotetramer. The cofactor is vanadate. In terms of processing, the N-terminus is blocked.

It is found in the secreted. It catalyses the reaction RH + Cl(-) + H2O2 = RCl + 2 H2O.. In terms of biological role, catalyzes the oxidation of chloride in the presence of hydrogen peroxide to hypochlorous acid (ClOH), which in turn can react with a nucleophilic acceptor (RH), to form a chlorinated compound. The sequence is that of Vanadium chloroperoxidase (CPO) from Curvularia inaequalis (Helminthosporium inaequale).